The following is a 65-amino-acid chain: Large ribosomal subunit protein bL33c (65 aa).

It belongs to the bacterial ribosomal protein bL33 family.

It is found in the plastid. It localises to the chloroplast. The polypeptide is Large ribosomal subunit protein bL33c (Psilotum nudum (Whisk fern)).